We begin with the raw amino-acid sequence, 225 residues long: MKITFYGHASLAIEVGGKHIIVDPFITGNPQAAAIDINTLKADYILLTHAHGDHVLDVETIAKNTNAVIVSNAEITSYYAKKGFNSHPMNHGGSWKFDFGKVKYVNAIHSSSFPDGTYGGNPGGFVIEGEHKNIYIAGDTALTYDMKLIPLRTKLDLAILPIGNNFTMDVEDAIIASDFIECDKILGYHFDTFGYIEINHEESIKKFFDKGKDLMLLAIGESIEL.

Belongs to the UPF0173 family.

This chain is UPF0173 metal-dependent hydrolase Fjoh_2786, found in Flavobacterium johnsoniae (strain ATCC 17061 / DSM 2064 / JCM 8514 / BCRC 14874 / CCUG 350202 / NBRC 14942 / NCIMB 11054 / UW101) (Cytophaga johnsonae).